The sequence spans 365 residues: MKMDVMSFIMNIINVMINTIIDYLNVNRVLALLMAFLMAGGIASMINKNFIIKYFGSNTPKYISYTVAAVSGSLLAVCSCTILPLFASIYKRGAGIGPATTFLFSGPAINVLAIFYSAALLGWDIGFLRAVFAVVVSILIGLSMEIIFKSHEKKRALRVPKADKISDRPLYQTITFFALQFIMLLVITASPKLFPTLSMPLYDGFLLKHLLFIILGIILAVTTKIWFKDEEIKNWLRESFTLLKIVFPLLIIGVAIAGAIKAIIPPSYIATYVGGNSITANFIASFIGALMYFATLTEVPIIKALMELGMGVGPAMALLLAGPSLSIPTVLTISKVLGKTKALTYLGLVVIFSTICGYIAGIILR.

The next 11 helical transmembrane spans lie at 6-26 (MSFIMNIINVMINTIIDYLNV), 32-52 (LLMAFLMAGGIASMINKNFII), 67-87 (VAAVSGSLLAVCSCTILPLFA), 108-128 (AINVLAIFYSAALLGWDIGFL), 130-150 (AVFAVVVSILIGLSMEIIFKS), 174-194 (ITFFALQFIMLLVITASPKLF), 201-221 (LYDGFLLKHLLFIILGIILAV), 245-265 (IVFPLLIIGVAIAGAIKAIIP), 282-302 (FIASFIGALMYFATLTEVPII), 308-328 (LGMGVGPAMALLLAGPSLSIP), and 344-364 (TYLGLVVIFSTICGYIAGIIL).

Belongs to the UPF0718 family.

The protein resides in the cell membrane. This chain is UPF0718 protein MJ0584, found in Methanocaldococcus jannaschii (strain ATCC 43067 / DSM 2661 / JAL-1 / JCM 10045 / NBRC 100440) (Methanococcus jannaschii).